The following is a 274-amino-acid chain: MQQLQNVIETAFERRADITPANVDTVTREAVKQVISLLDSGALRVAEKIDGQWVTHQWLKKAVLLSFRINDNQVIDGAESRYFDKAPMKFADYDEARFQKEGFRVVPPAAVRQGAFIARNTVLMPSYVNIGAYVDEGTMVDTWATVGSCAQIGKNVHLSGGVGIGGVLEPLQANPTIIEDNCFIGARSEVVEGVIVEEGSVISMGVYLGQSTKIYDRETGEVHYGRVPAGSVVVSGNLPSKDGKYSLYCAVIVKKVDAKTRGKVGINELLRTID.

Arginine 104 and aspartate 141 together coordinate substrate.

It belongs to the transferase hexapeptide repeat family. As to quaternary structure, homotrimer.

The protein localises to the cytoplasm. It catalyses the reaction (S)-2,3,4,5-tetrahydrodipicolinate + succinyl-CoA + H2O = (S)-2-succinylamino-6-oxoheptanedioate + CoA. Its pathway is amino-acid biosynthesis; L-lysine biosynthesis via DAP pathway; LL-2,6-diaminopimelate from (S)-tetrahydrodipicolinate (succinylase route): step 1/3. This Salmonella typhi protein is 2,3,4,5-tetrahydropyridine-2,6-dicarboxylate N-succinyltransferase.